Reading from the N-terminus, the 775-residue chain is Rab3 GTPase-activating protein catalytic subunit (775 aa).

Residues serine 173, serine 330, serine 373, serine 375, and serine 384 each carry the phosphoserine modification. Residues 324 to 351 (DEGKKTSPSDSMTKAYPADAGKAGGQLG) are disordered. A disordered region spans residues 386–414 (AEDLRGNGQESTKKGGPKDMAPLKPEGRL). Serine 458 bears the Phosphoserine mark.

The protein belongs to the Rab3-GAP catalytic subunit family. As to quaternary structure, the Rab3 GTPase-activating complex is a heterodimer composed of Rab3gap1 and Rab3gap2. The Rab3 GTPase-activating complex interacts with DMXL2. Interacts with LMAN1.

It localises to the cytoplasm. It is found in the endoplasmic reticulum. The protein localises to the golgi apparatus. Its subcellular location is the cis-Golgi network. Catalytic subunit of the Rab3 GTPase-activating (Rab3GAP) complex composed of RAB3GAP1 and RAB3GAP2, which has GTPase-activating protein (GAP) activity towards various Rab3 subfamily members (RAB3A, RAB3B, RAB3C and RAB3D), RAB5A and RAB43, and guanine nucleotide exchange factor (GEF) activity towards RAB18. As part of the Rab3GAP complex, acts as a GAP for Rab3 proteins by converting active RAB3-GTP to the inactive form RAB3-GDP. Rab3 proteins are involved in regulated exocytosis of neurotransmitters and hormones. The Rab3GAP complex, acts as a GEF for RAB18 by promoting the conversion of inactive RAB18-GDP to the active form RAB18-GTP. Recruits and stabilizes RAB18 at the cis-Golgi membrane where RAB18 is most likely activated. Also involved in RAB18 recruitment at the endoplasmic reticulum (ER) membrane where it maintains proper ER structure. Required for normal eye and brain development. May participate in neurodevelopmental processes such as proliferation, migration and differentiation before synapse formation, and non-synaptic vesicular release of neurotransmitters. The chain is Rab3 GTPase-activating protein catalytic subunit from Rattus norvegicus (Rat).